Here is a 369-residue protein sequence, read N- to C-terminus: UDP-3-O-acylglucosamine N-acyltransferase (369 aa).

The active-site Proton acceptor is histidine 263.

The protein belongs to the transferase hexapeptide repeat family. LpxD subfamily. Homotrimer.

The catalysed reaction is a UDP-3-O-[(3R)-3-hydroxyacyl]-alpha-D-glucosamine + a (3R)-hydroxyacyl-[ACP] = a UDP-2-N,3-O-bis[(3R)-3-hydroxyacyl]-alpha-D-glucosamine + holo-[ACP] + H(+). The protein operates within bacterial outer membrane biogenesis; LPS lipid A biosynthesis. In terms of biological role, catalyzes the N-acylation of UDP-3-O-acylglucosamine using 3-hydroxyacyl-ACP as the acyl donor. Is involved in the biosynthesis of lipid A, a phosphorylated glycolipid that anchors the lipopolysaccharide to the outer membrane of the cell. The protein is UDP-3-O-acylglucosamine N-acyltransferase of Burkholderia vietnamiensis (strain G4 / LMG 22486) (Burkholderia cepacia (strain R1808)).